The primary structure comprises 145 residues: Late embryogenesis abundant protein D-11 (145 aa).

Residues 1–18 (MAHFQNQYSAPEVTQTDA) are compositionally biased toward polar residues. The tract at residues 1 to 136 (MAHFQNQYSA…EAPWSPQPLI (136 aa)) is disordered. Over residues 47-57 (GHHHGGHHGLH) the composition is skewed to basic residues. Over residues 58-68 (RTGSSSSSSSS) the composition is skewed to low complexity. The span at 82–96 (KERLKEKIPGNKEHQ) shows a compositional bias: basic and acidic residues. Positions 97-107 (SQATSTTTPGQ) are enriched in polar residues.

This sequence belongs to the plant dehydrin family.

LEA protein are late embryogenesis abundant in higher plant seed embryos. There are two subsets of LEA proteins (5a, and 5b), the first ones are expressed when the cotyledon weight reach 80 mg and the second set are expressed above 100 mg. The function of those proteins is not known. This chain is Late embryogenesis abundant protein D-11, found in Gossypium hirsutum (Upland cotton).